A 430-amino-acid chain; its full sequence is Long-chain specific acyl-CoA dehydrogenase, mitochondrial (430 aa).

The transit peptide at M1 to S30 directs the protein to the mitochondrion. K42 carries the N6-acetyllysine modification. Residues S54 and S55 each carry the phosphoserine modification. N6-acetyllysine; alternate is present on residues K66 and K81. N6-succinyllysine; alternate is present on residues K66 and K81. 2 positions are modified to N6-acetyllysine: K92 and K95. K165 is subject to N6-succinyllysine. FAD-binding positions include I170 to S179 and F203 to S205. S179 provides a ligand contact to substrate. A227 to R228 is a substrate binding site. K240 carries the post-translational modification N6-succinyllysine. Residues K254 and K279 each carry the N6-acetyllysine; alternate modification. Residues K254 and K279 each carry the N6-succinyllysine; alternate modification. Substrate is bound by residues Y282 and P289 to R292. E291 functions as the Proton acceptor in the catalytic mechanism. Position 317 (R317) interacts with FAD. Position 318 is an N6-acetyllysine (K318). K322 bears the N6-acetyllysine; alternate mark. Residue K322 is modified to N6-succinyllysine; alternate. Q328 contacts FAD. N6-acetyllysine is present on K358. Position 362 is a phosphoserine (S362). Position 385–389 (Q385–G389) interacts with FAD. G412 to G413 contributes to the substrate binding site. T414–E416 is an FAD binding site.

It belongs to the acyl-CoA dehydrogenase family. As to quaternary structure, homotetramer. FAD serves as cofactor. Post-translationally, acetylation at Lys-318 and Lys-322 in proximity of the cofactor-binding sites strongly reduces catalytic activity. These sites are deacetylated by SIRT3.

The protein localises to the mitochondrion matrix. The enzyme catalyses a long-chain 2,3-saturated fatty acyl-CoA + oxidized [electron-transfer flavoprotein] + H(+) = a long-chain (2E)-enoyl-CoA + reduced [electron-transfer flavoprotein]. It carries out the reaction hexanoyl-CoA + oxidized [electron-transfer flavoprotein] + H(+) = (2E)-hexenoyl-CoA + reduced [electron-transfer flavoprotein]. The catalysed reaction is octanoyl-CoA + oxidized [electron-transfer flavoprotein] + H(+) = (2E)-octenoyl-CoA + reduced [electron-transfer flavoprotein]. It catalyses the reaction decanoyl-CoA + oxidized [electron-transfer flavoprotein] + H(+) = (2E)-decenoyl-CoA + reduced [electron-transfer flavoprotein]. The enzyme catalyses dodecanoyl-CoA + oxidized [electron-transfer flavoprotein] + H(+) = (2E)-dodecenoyl-CoA + reduced [electron-transfer flavoprotein]. It carries out the reaction tetradecanoyl-CoA + oxidized [electron-transfer flavoprotein] + H(+) = (2E)-tetradecenoyl-CoA + reduced [electron-transfer flavoprotein]. The catalysed reaction is oxidized [electron-transfer flavoprotein] + hexadecanoyl-CoA + H(+) = (2E)-hexadecenoyl-CoA + reduced [electron-transfer flavoprotein]. It catalyses the reaction octadecanoyl-CoA + oxidized [electron-transfer flavoprotein] + H(+) = (2E)-octadecenoyl-CoA + reduced [electron-transfer flavoprotein]. The enzyme catalyses eicosanoyl-CoA + oxidized [electron-transfer flavoprotein] + H(+) = (2E)-eicosenoyl-CoA + reduced [electron-transfer flavoprotein]. It carries out the reaction docosanoyl-CoA + oxidized [electron-transfer flavoprotein] + H(+) = (2E)-docosenoyl-CoA + reduced [electron-transfer flavoprotein]. The catalysed reaction is tetracosanoyl-CoA + oxidized [electron-transfer flavoprotein] + H(+) = (2E)-tetracosenoyl-CoA + reduced [electron-transfer flavoprotein]. It catalyses the reaction (5E)-tetradecenoyl-CoA + oxidized [electron-transfer flavoprotein] + H(+) = (2E,5E)-tetradecadienoyl-CoA + reduced [electron-transfer flavoprotein]. The enzyme catalyses (5Z)-tetradecenoyl-CoA + oxidized [electron-transfer flavoprotein] + H(+) = (2E,5Z)-tetradecadienoyl-CoA + reduced [electron-transfer flavoprotein]. It carries out the reaction oxidized [electron-transfer flavoprotein] + (9Z)-octadecenoyl-CoA + H(+) = (2E,9Z)-octadecadienoyl-CoA + reduced [electron-transfer flavoprotein]. The protein operates within lipid metabolism; mitochondrial fatty acid beta-oxidation. Functionally, long-chain specific acyl-CoA dehydrogenase is one of the acyl-CoA dehydrogenases that catalyze the first step of mitochondrial fatty acid beta-oxidation, an aerobic process breaking down fatty acids into acetyl-CoA and allowing the production of energy from fats. The first step of fatty acid beta-oxidation consists in the removal of one hydrogen from C-2 and C-3 of the straight-chain fatty acyl-CoA thioester, resulting in the formation of trans-2-enoyl-CoA. Among the different mitochondrial acyl-CoA dehydrogenases, long-chain specific acyl-CoA dehydrogenase can act on saturated and unsaturated acyl-CoAs with 6 to 24 carbons with a preference for 8 to 18 carbons long primary chains. The sequence is that of Long-chain specific acyl-CoA dehydrogenase, mitochondrial from Macaca fascicularis (Crab-eating macaque).